The following is a 303-amino-acid chain: UPF0282 protein PAE3680 (303 aa).

Belongs to the UPF0282 family.

The polypeptide is UPF0282 protein PAE3680 (Pyrobaculum aerophilum (strain ATCC 51768 / DSM 7523 / JCM 9630 / CIP 104966 / NBRC 100827 / IM2)).